We begin with the raw amino-acid sequence, 770 residues long: Transducin-like enhancer protein 1 (770 aa).

The interval 1–131 is q domain; the sequence is MFPQSRHPTP…IIGQQQLQAQ (131 aa). 2 disordered regions span residues 128-157 and 176-348; these read LQAQ…GIPP and HLAI…PAID. The GP domain stretch occupies residues 132-199; sequence HLSHGHGPPV…HHRDREPGTS (68 aa). Basic and acidic residues-rich tracts occupy residues 178 to 196 and 209 to 246; these read AIKD…DREP and RGTD…KSDD. The tract at residues 200–268 is ccN domain; the sequence is NSLLVPDSLR…SPRASPAHSP (69 aa). A Nuclear localization signal motif is present at residues 225–228; it reads KKRK. Ser-239 carries the post-translational modification Phosphoserine. The span at 257–266 shows a compositional bias: low complexity; that stretch reads PSSPRASPAH. Ser-259, Ser-263, and Ser-267 each carry phosphoserine; by CDK1. Over residues 267–283 the composition is skewed to basic and acidic residues; the sequence is SPRENGIDKNRLLKKDA. The SP domain stretch occupies residues 269-450; sequence RENGIDKNRL…GGKPAYSFHV (182 aa). Residues 284–298 are compositionally biased toward low complexity; the sequence is SSSPASTASSASSTS. Ser-286 carries the post-translational modification Phosphoserine. Positions 300–310 are enriched in basic and acidic residues; it reads KSKEMSLHEKA. WD repeat units lie at residues 470–501, 528–558, 572–602, 614–644, 696–726, and 737–767; these read GIPR…HVYT, NRDN…SIWD, SSAP…AVWD, GHTD…RSWD, LHES…NAWR, and KESS…TVYE.

This sequence belongs to the WD repeat Groucho/TLE family. As to quaternary structure, homooligomer and heterooligomer with other family members. Binds RUNX1, RUNX3, FOXA2, KDM6A, UTY, histone H3, HESX1, ESRRG and the NF-kappa-B subunit RELA. Interacts with HES1 (via WRPW motif). Binds TCF7, LEF1, TCF7L1 and TCF7L2. Interacts with SIX3. Interacts with EFNB1. Interacts with TLE4. Interacts with FOXG1/BF-1; the interaction is inhibited by TLE6/GRG6. Phosphorylated, probably by CDK1. The degree of phosphorylation varies throughout the cell cycle, and is highest at the G2/M transition. Becomes hyperphosphorylated in response to cell differentiation and interaction with HES1 or RUNX1. In terms of processing, ubiquitinated by XIAP/BIRC4. As to expression, in all tissues examined, mostly in brain, liver and muscle.

The protein resides in the nucleus. Transcriptional corepressor that binds to a number of transcription factors. Inhibits NF-kappa-B-regulated gene expression. Inhibits the transcriptional activation mediated by FOXA2, and by CTNNB1 and TCF family members in Wnt signaling. Enhances FOXG1/BF-1- and HES1-mediated transcriptional repression. The effects of full-length TLE family members may be modulated by association with dominant-negative AES. Unusual function as coactivator for ESRRG. In Homo sapiens (Human), this protein is Transducin-like enhancer protein 1 (TLE1).